A 267-amino-acid polypeptide reads, in one-letter code: Glutamate 5-kinase (267 aa).

An ATP-binding site is contributed by Lys-15. 3 residues coordinate substrate: Ser-55, Asp-142, and Asn-158. ATP is bound by residues 178 to 179 (SD) and 220 to 226 (TGGMATK).

It belongs to the glutamate 5-kinase family.

It localises to the cytoplasm. The enzyme catalyses L-glutamate + ATP = L-glutamyl 5-phosphate + ADP. It participates in amino-acid biosynthesis; L-proline biosynthesis; L-glutamate 5-semialdehyde from L-glutamate: step 1/2. In terms of biological role, catalyzes the transfer of a phosphate group to glutamate to form L-glutamate 5-phosphate. This is Glutamate 5-kinase from Ligilactobacillus salivarius (strain UCC118) (Lactobacillus salivarius).